Consider the following 191-residue polypeptide: Large ribosomal subunit protein bL9c (191 aa).

A chloroplast-targeting transit peptide spans 1–35 (MASPSCASTLPWTAAAFSYPRRLQTRRAPSLVIVA).

It belongs to the bacterial ribosomal protein bL9 family. As to quaternary structure, part of the 50S ribosomal subunit.

Its subcellular location is the plastid. The protein localises to the chloroplast. Its function is as follows. Binds to the 23S rRNA. This chain is Large ribosomal subunit protein bL9c (RPL9), found in Triticum aestivum (Wheat).